A 629-amino-acid chain; its full sequence is tRNA uridine 5-carboxymethylaminomethyl modification enzyme MnmG (629 aa).

Residues 13 to 18 (GGGHAG), valine 125, and serine 180 each bind FAD. Residue 273–287 (GPRYCPSIEDKVMRF) coordinates NAD(+). Residue glutamine 370 participates in FAD binding.

The protein belongs to the MnmG family. Homodimer. Heterotetramer of two MnmE and two MnmG subunits. Requires FAD as cofactor.

The protein localises to the cytoplasm. Functionally, NAD-binding protein involved in the addition of a carboxymethylaminomethyl (cmnm) group at the wobble position (U34) of certain tRNAs, forming tRNA-cmnm(5)s(2)U34. The protein is tRNA uridine 5-carboxymethylaminomethyl modification enzyme MnmG of Escherichia coli (strain SMS-3-5 / SECEC).